The following is a 492-amino-acid chain: High-affinity nickel transport protein (492 aa).

The Cytoplasmic portion of the chain corresponds to 1–24 (MLSRWTRRVNESRLAQRKLTLLGR). A helical transmembrane segment spans residues 25-45 (AIALVVGELLFNAVCWIAAGI). The Extracellular segment spans residues 46 to 50 (CFGKT). Residues 51-71 (DGILGLALLAWTIGLRHGLDA) form a helical membrane-spanning segment. The Cytoplasmic segment spans residues 72–94 (DHISAIDNATRQLVSQGQLPITC). A helical membrane pass occupies residues 95-115 (GLFFSLGHSTIVIVVNVAIAV). Residues 116–136 (SVDIYDKLDRVGSIGGIVGAA) are Extracellular-facing. A helical membrane pass occupies residues 137-157 (VSASFLFLIACLNIYFLVGAI). Topologically, residues 158 to 210 (KQRRSMKRRQALGLPPDEDEGDPSKIYGGGCMVRVVGPILRAVDRPWKMYPVG) are cytoplasmic. The helical transmembrane segment at 211–231 (VLFGFGFDTASSIALLAISAI) threads the bilayer. Residues 232-239 (AQRGPNGD) lie on the Extracellular side of the membrane. The helical transmembrane segment at 240–260 (AISHGKIVILPFLFTAGMSLV) threads the bilayer. Topologically, residues 261–382 (DSLDSILMLY…AKANTMSSLS (122 aa)) are cytoplasmic. Residues 383–403 (IILTLLSILVALSISLIEIMG) form a helical membrane-spanning segment. Over 404–439 (LIGDNCTQCQDAANDPDGGGLAGSWWRAWARANDQS) the chain is Extracellular. A glycan (N-linked (GlcNAc...) asparagine) is linked at asparagine 408. A helical transmembrane segment spans residues 440-460 (GYIGAAIVGCFAAILAGWYGA). Residues 461-492 (KWGKKKWKARRDANAAIVLEDNEDDAAETPVA) lie on the Cytoplasmic side of the membrane.

This sequence belongs to the NiCoT transporter (TC 2.A.52) family.

It localises to the cell membrane. Functionally, high-affinity nickel-specific transporter responsible for nickel uptake and required for high levels of activity of urease URE1. Does not transport cobalt. Plays a role in host brain invasion. This Cryptococcus neoformans var. grubii serotype A (strain H99 / ATCC 208821 / CBS 10515 / FGSC 9487) (Filobasidiella neoformans var. grubii) protein is High-affinity nickel transport protein.